Here is a 152-residue protein sequence, read N- to C-terminus: D-aminoacyl-tRNA deacylase (152 aa).

A Gly-cisPro motif, important for rejection of L-amino acids motif is present at residues 138 to 139 (GP).

This sequence belongs to the DTD family. In terms of assembly, homodimer.

It is found in the cytoplasm. It carries out the reaction glycyl-tRNA(Ala) + H2O = tRNA(Ala) + glycine + H(+). The catalysed reaction is a D-aminoacyl-tRNA + H2O = a tRNA + a D-alpha-amino acid + H(+). Its function is as follows. An aminoacyl-tRNA editing enzyme that deacylates mischarged D-aminoacyl-tRNAs. Also deacylates mischarged glycyl-tRNA(Ala), protecting cells against glycine mischarging by AlaRS. Acts via tRNA-based rather than protein-based catalysis; rejects L-amino acids rather than detecting D-amino acids in the active site. By recycling D-aminoacyl-tRNA to D-amino acids and free tRNA molecules, this enzyme counteracts the toxicity associated with the formation of D-aminoacyl-tRNA entities in vivo and helps enforce protein L-homochirality. In Chloroherpeton thalassium (strain ATCC 35110 / GB-78), this protein is D-aminoacyl-tRNA deacylase.